A 235-amino-acid polypeptide reads, in one-letter code: Calcium-activated potassium channel subunit beta-2 (235 aa).

Positions 1-45 (MFIWTSGRTSSSYRHDEKRNIYQKIRDHDLLDKRKTVTALKAGED) are ball and chain. The Cytoplasmic portion of the chain corresponds to 1-46 (MFIWTSGRTSSSYRHDEKRNIYQKIRDHDLLDKRKTVTALKAGEDR). A helical membrane pass occupies residues 47 to 67 (AILLGLAMMVCSIMMYFLLGI). Over 68–194 (TLLRSYMQSV…VILTKLYSSN (127 aa)) the chain is Extracellular. 3 N-linked (GlcNAc...) asparagine glycosylation sites follow: Asn-88, Asn-96, and Asn-119. The chain crosses the membrane as a helical span at residues 195–215 (VLFHSLFWPTCMMAGGVAIVA). The Cytoplasmic portion of the chain corresponds to 216–235 (MVKLTQYLSLLCERIQRINR).

Belongs to the KCNMB (TC 8.A.14.1) family. KCNMB2 subfamily. In terms of assembly, interacts with KCNMA1 tetramer. There are probably 4 molecules of KCMNB2 per KCNMA1 tetramer. Post-translationally, N-glycosylated. In terms of tissue distribution, expressed in kidney, heart and brain. Highly expressed in ovary. Expressed at low level in other tissues.

It is found in the membrane. In terms of biological role, regulatory subunit of the calcium activated potassium KCNMA1 (maxiK) channel. Modulates the calcium sensitivity and gating kinetics of KCNMA1, thereby contributing to KCNMA1 channel diversity. Acts as a negative regulator that confers rapid and complete inactivation of KCNMA1 channel complex. May participate in KCNMA1 inactivation in chromaffin cells of the adrenal gland or in hippocampal CA1 neurons. The sequence is that of Calcium-activated potassium channel subunit beta-2 (KCNMB2) from Homo sapiens (Human).